We begin with the raw amino-acid sequence, 428 residues long: Enolase (428 aa).

Position 163 (Gln-163) interacts with (2R)-2-phosphoglycerate. Glu-205 acts as the Proton donor in catalysis. The Mg(2+) site is built by Asp-242, Glu-285, and Asp-312. Lys-337, Arg-366, Ser-367, and Lys-388 together coordinate (2R)-2-phosphoglycerate. Catalysis depends on Lys-337, which acts as the Proton acceptor.

This sequence belongs to the enolase family. As to quaternary structure, component of the RNA degradosome, a multiprotein complex involved in RNA processing and mRNA degradation. It depends on Mg(2+) as a cofactor.

The protein resides in the cytoplasm. Its subcellular location is the secreted. It localises to the cell surface. The catalysed reaction is (2R)-2-phosphoglycerate = phosphoenolpyruvate + H2O. It participates in carbohydrate degradation; glycolysis; pyruvate from D-glyceraldehyde 3-phosphate: step 4/5. Its function is as follows. Catalyzes the reversible conversion of 2-phosphoglycerate (2-PG) into phosphoenolpyruvate (PEP). It is essential for the degradation of carbohydrates via glycolysis. The chain is Enolase from Halorhodospira halophila (strain DSM 244 / SL1) (Ectothiorhodospira halophila (strain DSM 244 / SL1)).